The primary structure comprises 130 residues: Small ribosomal subunit protein uS9 (130 aa).

The protein belongs to the universal ribosomal protein uS9 family.

The chain is Small ribosomal subunit protein uS9 from Citrobacter koseri (strain ATCC BAA-895 / CDC 4225-83 / SGSC4696).